The primary structure comprises 475 residues: Retrotransposon Gag-like protein 3 (475 aa).

2 stretches are compositionally biased toward basic and acidic residues: residues 51 to 66 (LLRKSSEAKEPQKLPE) and 78 to 87 (KTPEFKEPQK). Disordered stretches follow at residues 51 to 101 (LLRK…EPPA), 152 to 173 (EPKNSEPQDPPNIEKPQEAPEY), and 397 to 421 (DPNPLGKSSSAEGDGPESPPAENQP). A CCHC-type zinc finger spans residues 443 to 462 (RLCLYCGYPGHFARDCPVKP).

Its subcellular location is the nucleus. Functionally, may function as a transcriptional regulator. Plays a role in postnatal myogenesis, may be involved in the regulation of satellite cells self-renewal. This is Retrotransposon Gag-like protein 3 from Homo sapiens (Human).